An 86-amino-acid polypeptide reads, in one-letter code: Small ribosomal subunit protein bS20 (86 aa).

Over residues 1–11 the composition is skewed to polar residues; it reads MANIKSQIKRN. Residues 1–20 are disordered; it reads MANIKSQIKRNLTNEKRHQA.

Belongs to the bacterial ribosomal protein bS20 family.

Its function is as follows. Binds directly to 16S ribosomal RNA. The chain is Small ribosomal subunit protein bS20 from Acholeplasma laidlawii (strain PG-8A).